Here is a 61-residue protein sequence, read N- to C-terminus: Beta-insect depressant toxin BaIT2 (61 aa).

The region spanning 1–61 (DGYIRRRDGC…TWKSETNTCG (61 aa)) is the LCN-type CS-alpha/beta domain. 4 cysteine pairs are disulfide-bonded: cysteine 10-cysteine 60, cysteine 14-cysteine 35, cysteine 21-cysteine 42, and cysteine 25-cysteine 44.

The protein belongs to the long (4 C-C) scorpion toxin superfamily. Sodium channel inhibitor family. Beta subfamily. Expressed by the venom gland.

Its subcellular location is the secreted. In terms of biological role, depressant insect beta-toxins cause a transient contraction paralysis followed by a slow flaccid paralysis. They bind voltage-independently at site-4 of sodium channels (Nav) and shift the voltage of activation toward more negative potentials thereby affecting sodium channel activation and promoting spontaneous and repetitive firing. This toxin is active only on insects. The sequence is that of Beta-insect depressant toxin BaIT2 from Buthacus arenicola (North African scorpion).